The primary structure comprises 390 residues: Succinate--CoA ligase [ADP-forming] subunit beta (390 aa).

An ATP-grasp domain is found at 9 to 248 (KDILRKFGVS…ISEEDPFEVE (240 aa)). ATP contacts are provided by residues lysine 50, 57-59 (GRG), glutamate 103, methionine 106, and glutamate 111. Asparagine 203 and aspartate 217 together coordinate Mg(2+). Substrate contacts are provided by residues asparagine 268 and 325-327 (GIV).

Belongs to the succinate/malate CoA ligase beta subunit family. As to quaternary structure, heterotetramer of two alpha and two beta subunits. It depends on Mg(2+) as a cofactor.

The enzyme catalyses succinate + ATP + CoA = succinyl-CoA + ADP + phosphate. It carries out the reaction GTP + succinate + CoA = succinyl-CoA + GDP + phosphate. It functions in the pathway carbohydrate metabolism; tricarboxylic acid cycle; succinate from succinyl-CoA (ligase route): step 1/1. Its function is as follows. Succinyl-CoA synthetase functions in the citric acid cycle (TCA), coupling the hydrolysis of succinyl-CoA to the synthesis of either ATP or GTP and thus represents the only step of substrate-level phosphorylation in the TCA. The beta subunit provides nucleotide specificity of the enzyme and binds the substrate succinate, while the binding sites for coenzyme A and phosphate are found in the alpha subunit. The sequence is that of Succinate--CoA ligase [ADP-forming] subunit beta from Prosthecochloris aestuarii (strain DSM 271 / SK 413).